Reading from the N-terminus, the 689-residue chain is DNA ligase (689 aa).

Residues 40-44 (DAEYD), 89-90 (SL), and Glu121 each bind NAD(+). Lys123 acts as the N6-AMP-lysine intermediate in catalysis. The NAD(+) site is built by Arg144, Glu179, Lys295, and Lys319. Residues Cys413, Cys416, Cys431, and Cys437 each coordinate Zn(2+). Residues 610–689 (REQSSLTGKI…AEWLTLVRDI (80 aa)) form the BRCT domain.

This sequence belongs to the NAD-dependent DNA ligase family. LigA subfamily. The cofactor is Mg(2+). Requires Mn(2+) as cofactor.

The catalysed reaction is NAD(+) + (deoxyribonucleotide)n-3'-hydroxyl + 5'-phospho-(deoxyribonucleotide)m = (deoxyribonucleotide)n+m + AMP + beta-nicotinamide D-nucleotide.. Its function is as follows. DNA ligase that catalyzes the formation of phosphodiester linkages between 5'-phosphoryl and 3'-hydroxyl groups in double-stranded DNA using NAD as a coenzyme and as the energy source for the reaction. It is essential for DNA replication and repair of damaged DNA. This Rickettsia bellii (strain OSU 85-389) protein is DNA ligase.